The chain runs to 91 residues: MFQSILMIVLVVMSISLFVCFIRTLIGPTMSDRIVALDTFGINLIGFIGVIMMLQETLAYSEVVLVISILAFIGSIALSKFIERGVVFDRG.

A run of 3 helical transmembrane segments spans residues 5 to 27 (ILMI…TLIG), 34 to 53 (IVAL…VIMM), and 63 to 82 (VVLV…SKFI).

The protein belongs to the CPA3 antiporters (TC 2.A.63) subunit F family. In terms of assembly, forms a heterooligomeric complex that consists of seven subunits: MrpA, MrpB, MrpC, MrpD, MrpE, MrpF and MrpG.

It is found in the cell membrane. Functionally, mnh complex is a Na(+)Li(+)/H(+) antiporter involved in Na(+) and/or Li(+) excretion and Na(+) resistance. Na(+)/H(+) antiport consumes a transmembrane electrical potential, and is thus inferred to be electrogenic. Does not transport K(+), Ca(2+) or Mg(2+). The sequence is that of Na(+)/H(+) antiporter subunit F (mrpF) from Alkalihalophilus pseudofirmus (strain ATCC BAA-2126 / JCM 17055 / OF4) (Bacillus pseudofirmus).